A 463-amino-acid polypeptide reads, in one-letter code: Glutathione amide reductase (463 aa).

The Ni(2+) site is built by T2, Q3, and H4. Residues 14-15 (SG), E34, and T41 contribute to the FAD site. C42 and C47 are oxidised to a cystine. FAD is bound by residues K50 and 113-114 (HA). K50 lines the NAD(+) pocket. Residues 174–180 (AGYIGIE), 197–198 (LE), V230, and G261 each bind NAD(+). Residues D302 and 308–310 (QLT) each bind FAD. NAD(+) is bound by residues Q308 and V341. Position 437 (H437) interacts with FAD. H437 functions as the Proton acceptor in the catalytic mechanism.

This sequence belongs to the class-I pyridine nucleotide-disulfide oxidoreductase family. In terms of assembly, homodimer. It depends on FAD as a cofactor.

It catalyses the reaction 2 glutathione amide + NAD(+) = glutathione amide disulfide + NADH + H(+). In terms of biological role, catalyzes the reduction of glutathione amide disulfide (GASSAG) to restore glutathione amide (GASH) in the presence of NADH. May play a role in GASH metabolism under anaerobic conditions as a sulfide carrier necessary for cytoplasmic sulfide oxidation. In Marichromatium gracile (Chromatium gracile), this protein is Glutathione amide reductase.